The sequence spans 288 residues: MSSRKQGSQPRGQQSAEEENFKKPTRSNMQRSKMRGASSGKKTAGPQQKNLEPALPGRWGGRSAENPPSGSVRKTRKNKQKTPGNEDGGSTSEAPQPPRKKRARADPTVESEEAFKNRMEVKVKIPEELKPWLVEDWDLVTRQKQLFQLPAKKNVDAILEEYANCKKSQGNVDNKEYAVNEVVAGIKEYFNVMLGTQLLYKFERPQYAEILLAHPDAPMSQVYGAPHLLRLFVRIGAMLAYTPLDEKSLALLLGYLHDFLKYLAKNSASLFTASDYKVASAEYHRKAL.

A compositionally biased stretch (polar residues) spans 1–15 (MSSRKQGSQPRGQQS). The tract at residues 1–113 (MSSRKQGSQP…RADPTVESEE (113 aa)) is disordered. Residue serine 71 is modified to Phosphoserine. Residues 117-288 (NRMEVKVKIP…ASAEYHRKAL (172 aa)) form the MRG domain.

In terms of assembly, component of the NuA4 histone acetyltransferase complex which contains the catalytic subunit KAT5/TIP60 and the subunits EP400, TRRAP/PAF400, BRD8/SMAP, EPC1, DMAP1/DNMAP1, RUVBL1/TIP49, RUVBL2, ING3, actin, ACTL6A/BAF53A, MORF4L1/MRG15, MORF4L2/MRGX, MRGBP, YEATS4/GAS41 and VPS72/YL1. The NuA4 complex interacts with MYC and the adenovirus E1A protein. MORF4L1 may also participate in the formation of NuA4 related complexes which lack the KAT5/TIP60 catalytic subunit, but which include the SWI/SNF related protein SRCAP. Component of the MSIN3A histone deacetylase complex, which includes SIN3A, HDAC2, ARID4B, MORF4L1, RBBP4/RbAp48, and RBBP7/RbAp46. Interacts with MRFAP1 and RB1. May also interact with one or more as yet undefined members of the TLE (transducin-like enhancer of split) family of transcriptional repressors.

It localises to the nucleus. Its function is as follows. Component of the NuA4 histone acetyltransferase complex which is involved in transcriptional activation of select genes principally by acetylation of nucleosomal histone H4 and H2A. This modification may both alter nucleosome - DNA interactions and promote interaction of the modified histones with other proteins which positively regulate transcription. This complex may be required for the activation of transcriptional programs associated with oncogene and proto-oncogene mediated growth induction, tumor suppressor mediated growth arrest and replicative senescence, apoptosis, and DNA repair. The NuA4 complex ATPase and helicase activities seem to be, at least in part, contributed by the association of RUVBL1 and RUVBL2 with EP400. NuA4 may also play a direct role in DNA repair when directly recruited to sites of DNA damage. Also a component of the MSIN3A complex which acts to repress transcription by deacetylation of nucleosomal histones. The polypeptide is Mortality factor 4-like protein 2 (MORF4L2) (Macaca fascicularis (Crab-eating macaque)).